Reading from the N-terminus, the 114-residue chain is Hydrogenase maturation factor HypA (114 aa).

His-2 serves as a coordination point for Ni(2+). Zn(2+) contacts are provided by Cys-73, Cys-76, Cys-90, and Cys-93.

The protein belongs to the HypA/HybF family.

Its function is as follows. Involved in the maturation of [NiFe] hydrogenases. Required for nickel insertion into the metal center of the hydrogenase. The chain is Hydrogenase maturation factor HypA from Klebsiella pneumoniae (strain 342).